Here is a 390-residue protein sequence, read N- to C-terminus: Protein-glutamate methylesterase/protein-glutamine glutaminase 1 (390 aa).

Positions 4–121 constitute a Response regulatory domain; sequence KVLVVDDSGF…SRNPQKVKQL (118 aa). At Asp-55 the chain carries 4-aspartylphosphate. Over residues 132–186 the composition is skewed to low complexity; that stretch reads SNRRSSGIGSASAASPAPAAPAPSTLSSRAPAPSAAAPARAVPSRTVAPAAAPAA. A disordered region spans residues 132–201; it reads SNRRSSGIGS…PAHPTTTGTA (70 aa). Residues 195–387 form the CheB-type methylesterase domain; sequence PTTTGTAKRK…LDDIGRHLVE (193 aa). Active-site residues include Ser-214, His-241, and Asp-334.

It belongs to the CheB family. In terms of processing, phosphorylated by CheA. Phosphorylation of the N-terminal regulatory domain activates the methylesterase activity.

The protein localises to the cytoplasm. It catalyses the reaction [protein]-L-glutamate 5-O-methyl ester + H2O = L-glutamyl-[protein] + methanol + H(+). The catalysed reaction is L-glutaminyl-[protein] + H2O = L-glutamyl-[protein] + NH4(+). Involved in chemotaxis. Part of a chemotaxis signal transduction system that modulates chemotaxis in response to various stimuli. Catalyzes the demethylation of specific methylglutamate residues introduced into the chemoreceptors (methyl-accepting chemotaxis proteins or MCP) by CheR. Also mediates the irreversible deamidation of specific glutamine residues to glutamic acid. The polypeptide is Protein-glutamate methylesterase/protein-glutamine glutaminase 1 (Pseudomonas syringae pv. tomato (strain ATCC BAA-871 / DC3000)).